A 501-amino-acid polypeptide reads, in one-letter code: Lysine--tRNA ligase (501 aa).

Glutamate 402 and glutamate 409 together coordinate Mg(2+).

This sequence belongs to the class-II aminoacyl-tRNA synthetase family. In terms of assembly, homodimer. The cofactor is Mg(2+).

It localises to the cytoplasm. It carries out the reaction tRNA(Lys) + L-lysine + ATP = L-lysyl-tRNA(Lys) + AMP + diphosphate. In Helicobacter pylori (strain Shi470), this protein is Lysine--tRNA ligase.